The following is a 351-amino-acid chain: Maleylacetate reductase (351 aa).

It belongs to the iron-containing alcohol dehydrogenase family. In terms of assembly, homodimer.

It carries out the reaction 3-oxoadipate + NAD(+) = maleylacetate + NADH + H(+). It functions in the pathway aromatic compound metabolism. Involved in the gamma-resorcylate (2,6-dihydroxybenzoate) catabolism. Catalyzes the reduction of maleylacetate to 3-oxoadipate. The protein is Maleylacetate reductase of Rhizobium sp. (strain MTP-10005).